Reading from the N-terminus, the 377-residue chain is Probable sensor histidine kinase HK (377 aa).

Disordered stretches follow at residues 1–169 and 346–377; these read MAHP…RPAD and LPTP…TSDQ. Residues 10–54 show a composition bias toward basic residues; that stretch reads RLQRRHGARSGSSRCRHRRPVPRRRSRSRPRWRAARAHRRHHRRS. Positions 84-98 are enriched in basic and acidic residues; that stretch reads RRPDPRGGANTDHHA. Basic residues-rich tracts occupy residues 99–115 and 137–146; these read APRH…RRRD and TTVRRRRQPR. The Histidine kinase domain occupies 146–350; it reads RITHPVGTAD…ELRITLPTPR (205 aa). Histidine 149 carries the phosphohistidine; by autocatalysis modification. Over residues 352 to 377 the composition is skewed to basic and acidic residues; that stretch reads PFHEELPRITSSDTKDPNREHDTSDQ.

Autophosphorylated.

The enzyme catalyses ATP + protein L-histidine = ADP + protein N-phospho-L-histidine.. Its function is as follows. Member of the two-component system HK/TcrA. Phosphorylates TcrA. The protein is Probable sensor histidine kinase HK of Mycobacterium tuberculosis (strain CDC 1551 / Oshkosh).